The chain runs to 449 residues: Na(+)/H(+) antiporter NhaA 1 (449 aa).

The next 11 membrane-spanning stretches (helical) occupy residues 32–52 (IEATSGAVLLLATVVALTLSN), 87–107 (GLMTLFFFIVALEIKREVVLG), 114–134 (MVAFSVVAAAGGMLVPMGLYL), 145–165 (GWGVVMPTDTAFVIGCLALLG), 174–194 (VFLLSLAVVDDLAAILVVAVG), 202–222 (TALALGAVGLVIIRGMALLGV), 233–253 (AIIWLAVNASGIHATIVGVIL), 318–338 (WVAFGVMPLFALANAGVSITI), 347–367 (LAVMAGFVLGKPIGVTAFAWL), 382–402 (WGGLVGGALLTGIGFTMALFI), and 417–437 (LGILAASVVSSVAGLTLLCMF).

Belongs to the NhaA Na(+)/H(+) (TC 2.A.33) antiporter family.

The protein localises to the cell inner membrane. It catalyses the reaction Na(+)(in) + 2 H(+)(out) = Na(+)(out) + 2 H(+)(in). In terms of biological role, na(+)/H(+) antiporter that extrudes sodium in exchange for external protons. This is Na(+)/H(+) antiporter NhaA 1 from Acidiphilium cryptum (strain JF-5).